A 269-amino-acid polypeptide reads, in one-letter code: Hydroxyethylthiazole kinase (269 aa).

M45 contacts substrate. Residues R121 and T167 each contribute to the ATP site. Position 194 (G194) interacts with substrate.

This sequence belongs to the Thz kinase family. The cofactor is Mg(2+).

The enzyme catalyses 5-(2-hydroxyethyl)-4-methylthiazole + ATP = 4-methyl-5-(2-phosphooxyethyl)-thiazole + ADP + H(+). It participates in cofactor biosynthesis; thiamine diphosphate biosynthesis; 4-methyl-5-(2-phosphoethyl)-thiazole from 5-(2-hydroxyethyl)-4-methylthiazole: step 1/1. Functionally, catalyzes the phosphorylation of the hydroxyl group of 4-methyl-5-beta-hydroxyethylthiazole (THZ). The sequence is that of Hydroxyethylthiazole kinase from Bacillus cereus (strain ATCC 14579 / DSM 31 / CCUG 7414 / JCM 2152 / NBRC 15305 / NCIMB 9373 / NCTC 2599 / NRRL B-3711).